A 142-amino-acid polypeptide reads, in one-letter code: Interleukin-3 (142 aa).

A signal peptide spans 1 to 18; that stretch reads MSHLPILLLLLLVSPGLQ. Asn33 carries an N-linked (GlcNAc...) asparagine glycan. A disulfide bridge links Cys34 with Cys102.

It belongs to the IL-3 family. Monomer. Activated T-cells, mast cells, natural killer cells.

The protein resides in the secreted. Functionally, granulocyte/macrophage colony-stimulating factors are cytokines that act in hematopoiesis by controlling the production, differentiation, and function of 2 related white cell populations of the blood, the granulocytes and the monocytes-macrophages. In terms of biological role, this CSF induces granulocytes, macrophages, mast cells, stem cells, erythroid cells, eosinophils and megakaryocytes. The chain is Interleukin-3 (IL3) from Callithrix jacchus (White-tufted-ear marmoset).